A 203-amino-acid chain; its full sequence is Holliday junction branch migration complex subunit RuvA (203 aa).

The segment at 1–61 is domain I; that stretch reads MIIYKYGKIM…EYTKVTYGFD (61 aa). The tract at residues 62–139 is domain II; it reads NFKELVIFED…KFMKKLTSDE (78 aa). Residues 140 to 147 are flexible linker; it reads AAKIKVPA. Residues 147-203 form a domain III region; that stretch reads ASSENENKFLDTMKMLGFKQQQIKFALDKIELNDDIETCVENAIKLISQQQHETSRV.

The protein belongs to the RuvA family. Homotetramer. Forms an RuvA(8)-RuvB(12)-Holliday junction (HJ) complex. HJ DNA is sandwiched between 2 RuvA tetramers; dsDNA enters through RuvA and exits via RuvB. An RuvB hexamer assembles on each DNA strand where it exits the tetramer. Each RuvB hexamer is contacted by two RuvA subunits (via domain III) on 2 adjacent RuvB subunits; this complex drives branch migration. In the full resolvosome a probable DNA-RuvA(4)-RuvB(12)-RuvC(2) complex forms which resolves the HJ.

Its subcellular location is the cytoplasm. The RuvA-RuvB-RuvC complex processes Holliday junction (HJ) DNA during genetic recombination and DNA repair, while the RuvA-RuvB complex plays an important role in the rescue of blocked DNA replication forks via replication fork reversal (RFR). RuvA specifically binds to HJ cruciform DNA, conferring on it an open structure. The RuvB hexamer acts as an ATP-dependent pump, pulling dsDNA into and through the RuvAB complex. HJ branch migration allows RuvC to scan DNA until it finds its consensus sequence, where it cleaves and resolves the cruciform DNA. This Metamycoplasma arthritidis (strain 158L3-1) (Mycoplasma arthritidis) protein is Holliday junction branch migration complex subunit RuvA.